A 513-amino-acid chain; its full sequence is ATP synthase subunit alpha (513 aa).

169-176 is a binding site for ATP; that stretch reads GDRQIGKT.

This sequence belongs to the ATPase alpha/beta chains family. In terms of assembly, F-type ATPases have 2 components, CF(1) - the catalytic core - and CF(0) - the membrane proton channel. CF(1) has five subunits: alpha(3), beta(3), gamma(1), delta(1), epsilon(1). CF(0) has three main subunits: a(1), b(2) and c(9-12). The alpha and beta chains form an alternating ring which encloses part of the gamma chain. CF(1) is attached to CF(0) by a central stalk formed by the gamma and epsilon chains, while a peripheral stalk is formed by the delta and b chains.

Its subcellular location is the cell inner membrane. It carries out the reaction ATP + H2O + 4 H(+)(in) = ADP + phosphate + 5 H(+)(out). Functionally, produces ATP from ADP in the presence of a proton gradient across the membrane. The alpha chain is a regulatory subunit. In Vibrio alginolyticus, this protein is ATP synthase subunit alpha.